We begin with the raw amino-acid sequence, 360 residues long: UDP-N-acetylglucosamine--N-acetylmuramyl-(pentapeptide) pyrophosphoryl-undecaprenol N-acetylglucosamine transferase (360 aa).

UDP-N-acetyl-alpha-D-glucosamine contacts are provided by serine 198 and glutamine 289.

Belongs to the glycosyltransferase 28 family. MurG subfamily.

Its subcellular location is the cell membrane. It catalyses the reaction Mur2Ac(oyl-L-Ala-gamma-D-Glu-L-Lys-D-Ala-D-Ala)-di-trans,octa-cis-undecaprenyl diphosphate + UDP-N-acetyl-alpha-D-glucosamine = beta-D-GlcNAc-(1-&gt;4)-Mur2Ac(oyl-L-Ala-gamma-D-Glu-L-Lys-D-Ala-D-Ala)-di-trans,octa-cis-undecaprenyl diphosphate + UDP + H(+). It participates in cell wall biogenesis; peptidoglycan biosynthesis. In terms of biological role, cell wall formation. Catalyzes the transfer of a GlcNAc subunit on undecaprenyl-pyrophosphoryl-MurNAc-pentapeptide (lipid intermediate I) to form undecaprenyl-pyrophosphoryl-MurNAc-(pentapeptide)GlcNAc (lipid intermediate II). The protein is UDP-N-acetylglucosamine--N-acetylmuramyl-(pentapeptide) pyrophosphoryl-undecaprenol N-acetylglucosamine transferase of Streptococcus pyogenes serotype M3 (strain SSI-1).